The primary structure comprises 712 residues: 3',5'-cyclic-AMP phosphodiesterase 4C (712 aa).

2 disordered regions span residues 1–31 and 45–64; these read MENLGVGEGAEACSRLSRSRGRHSMTRAPKH and RFYSDPDKSAGCRERDLSPR. The segment covering 17-31 has biased composition (basic residues); the sequence is SRSRGRHSMTRAPKH. Residues 48 to 64 show a composition bias toward basic and acidic residues; it reads SDPDKSAGCRERDLSPR. A Phosphoserine modification is found at Ser-73. The disordered stretch occupies residues 181–200; the sequence is AKQGPVGNPSSSNQLPPAED. Positions 312 to 641 constitute a PDEase domain; the sequence is VQTDQEEQLA…EWYQSKIPRS (330 aa). His-388 acts as the Proton donor in catalysis. His-388 contacts 3',5'-cyclic AMP. Residues His-388 and His-392 each coordinate AMP. 4 residues coordinate Zn(2+): His-392, His-428, Asp-429, and Asp-546. The AMP site is built by Asp-429, Asp-546, Gln-597, and Phe-600. Asp-429 serves as a coordination point for Mg(2+). Asp-429 contacts Mn(2+). Residues Gln-597 and Phe-600 each coordinate 3',5'-cyclic AMP. Disordered stretches follow at residues 636–655 and 664–712; these read SKIPRSPSDLTNPERDGPDR and EAEE…NQRT. At Ser-641 the chain carries Phosphoserine. Residues 664-678 show a composition bias toward acidic residues; that stretch reads EAEEEDEEEEEEGEE.

This sequence belongs to the cyclic nucleotide phosphodiesterase family. PDE4 subfamily. Part of a complex containing AKAP5, ADCY5, ADCY6 and PKD2. Zn(2+) is required as a cofactor. The cofactor is Mg(2+). Mn(2+) serves as cofactor. As to expression, expressed in various tissues but not in cells of the immune system.

The protein resides in the cell projection. The protein localises to the cilium. It catalyses the reaction 3',5'-cyclic AMP + H2O = AMP + H(+). The protein operates within purine metabolism; 3',5'-cyclic AMP degradation; AMP from 3',5'-cyclic AMP: step 1/1. Its activity is regulated as follows. Inhibited by rolipram. In terms of biological role, hydrolyzes the second messenger cAMP, which is a key regulator of many important physiological processes. The polypeptide is 3',5'-cyclic-AMP phosphodiesterase 4C (Homo sapiens (Human)).